The following is a 419-amino-acid chain: S-adenosylmethionine synthase (419 aa).

Histidine 15 serves as a coordination point for ATP. Aspartate 17 contributes to the Mg(2+) binding site. Position 43 (glutamate 43) interacts with K(+). Residues glutamate 56 and glutamine 100 each contribute to the L-methionine site. Residues 100–110 (QSPDIAQGVNE) form a flexible loop region. ATP-binding positions include 171–173 (DGK), 248–249 (KF), aspartate 257, 263–264 (RK), alanine 280, and lysine 284. Aspartate 257 provides a ligand contact to L-methionine. Lysine 288 contacts L-methionine.

It belongs to the AdoMet synthase family. Homotetramer; dimer of dimers. The cofactor is Mg(2+). Requires K(+) as cofactor.

It localises to the cytoplasm. It carries out the reaction L-methionine + ATP + H2O = S-adenosyl-L-methionine + phosphate + diphosphate. Its pathway is amino-acid biosynthesis; S-adenosyl-L-methionine biosynthesis; S-adenosyl-L-methionine from L-methionine: step 1/1. Catalyzes the formation of S-adenosylmethionine (AdoMet) from methionine and ATP. The overall synthetic reaction is composed of two sequential steps, AdoMet formation and the subsequent tripolyphosphate hydrolysis which occurs prior to release of AdoMet from the enzyme. The chain is S-adenosylmethionine synthase from Prochlorococcus marinus (strain MIT 9313).